The chain runs to 294 residues: Cytidine deaminase (294 aa).

2 consecutive CMP/dCMP-type deaminase domains span residues 48-168 (DEDA…FGPK) and 186-294 (LTGD…VLLG). Residue 89 to 91 (NME) coordinates substrate. H102 lines the Zn(2+) pocket. E104 (proton donor) is an active-site residue. Zn(2+) is bound by residues C129 and C132.

It belongs to the cytidine and deoxycytidylate deaminase family. As to quaternary structure, homodimer. Requires Zn(2+) as cofactor.

It catalyses the reaction cytidine + H2O + H(+) = uridine + NH4(+). It carries out the reaction 2'-deoxycytidine + H2O + H(+) = 2'-deoxyuridine + NH4(+). In terms of biological role, this enzyme scavenges exogenous and endogenous cytidine and 2'-deoxycytidine for UMP synthesis. This Salmonella paratyphi A (strain ATCC 9150 / SARB42) protein is Cytidine deaminase.